An 862-amino-acid chain; its full sequence is Probable linoleate 9S-lipoxygenase 5 (862 aa).

The region spanning 36–161 (NDVNASLLDG…KYKSERIFFA (126 aa)) is the PLAT domain. Residues 164–862 (AYLPGETPEP…GKGIPNSVSI (699 aa)) enclose the Lipoxygenase domain. Histidine 523, histidine 528, histidine 714, asparagine 718, and isoleucine 862 together coordinate Fe cation.

This sequence belongs to the lipoxygenase family. As to quaternary structure, monomer. It depends on Fe cation as a cofactor. As to expression, not detected in leaves, stems, flowers, roots, tubers and stolons during normal growth and development.

The protein resides in the cytoplasm. It carries out the reaction (9Z,12Z)-octadecadienoate + O2 = (9S)-hydroperoxy-(10E,12Z)-octadecadienoate. It participates in lipid metabolism; oxylipin biosynthesis. Plant lipoxygenases may be involved in a number of diverse aspects of plant physiology including growth and development, pest resistance, and senescence or responses to wounding. May contribute to cell death during the hypersensitive response (HR) by the massive production of free fatty acid hydroperoxides. Catalyzes the hydroperoxidation of lipids containing a cis,cis-1,4-pentadiene structure. In Solanum tuberosum (Potato), this protein is Probable linoleate 9S-lipoxygenase 5 (LOX1.5).